The sequence spans 862 residues: MAHTFRGCSLAFMFIITWLLIKAKIDACKRGDVTVKPSHVILLGSTVNITCSLKPRQGCFHYSRRNKLILYKFDRRINFHHGHSLNSQVTGLPLGTTLFVCKLACINSDEIQICGAEIFVGVAPEQPQNLSCIQKGEQGTVACTWERGRDTHLYTEYTLQLSGPKNLTWQKQCKDIYCDYLDFGINLTPESPESNFTAKVTAVNSLGSSSSLPSTFTFLDIVRPLPPWDIRIKFQKASVSRCTLYWRDEGLVLLNRLRYRPSNSRLWNMVNVTKAKGRHDLLDLKPFTEYEFQISSKLHLYKGSWSDWSESLRAQTPEEEPTGMLDVWYMKRHIDYSRQQISLFWKNLSVSEARGKILHYQVTLQELTGGKAMTQNITGHTSWTTVIPRTGNWAVAVSAANSKGSSLPTRINIMNLCEAGLLAPRQVSANSEGMDNILVTWQPPRKDPSAVQEYVVEWRELHPGGDTQVPLNWLRSRPYNVSALISENIKSYICYEIRVYALSGDQGGCSSILGNSKHKAPLSGPHINAITEEKGSILISWNSIPVQEQMGCLLHYRIYWKERDSNSQPQLCEIPYRVSQNSHPINSLQPRVTYVLWMTALTAAGESSHGNEREFCLQGKANWMAFVAPSICIAIIMVGIFSTHYFQQKVFVLLAALRPQWCSREIPDPANSTCAKKYPIAEEKTQLPLDRLLIDWPTPEDPEPLVISEVLHQVTPVFRHPPCSNWPQREKGIQGHQASEKDMMHSASSPPPPRALQAESRQLVDLYKVLESRGSDPKPENPACPWTVLPAGDLPTHDGYLPSNIDDLPSHEAPLADSLEELEPQHISLSVFPSSSLHPLTFSCGDKLTLDQLKMRCDSLML.

The first 23 residues, 1 to 23, serve as a signal peptide directing secretion; the sequence is MAHTFRGCSLAFMFIITWLLIKA. The Extracellular segment spans residues 24-622; the sequence is KIDACKRGDV…REFCLQGKAN (599 aa). Residues asparagine 48, asparagine 129, asparagine 166, asparagine 195, and asparagine 271 are each glycosylated (N-linked (GlcNAc...) asparagine). Fibronectin type-III domains lie at 126–221, 226–319, 320–419, 423–520, and 521–620; these read QPQN…FLDI, PPWD…TPEE, EPTG…LCEA, APRQ…KHKA, and PLSG…LQGK. The short motif at 305-309 is the WSXWS motif element; that stretch reads WSDWS. N-linked (GlcNAc...) asparagine glycosylation is found at asparagine 347, asparagine 376, and asparagine 480. The chain crosses the membrane as a helical span at residues 623–643; that stretch reads WMAFVAPSICIAIIMVGIFST. Residues 644-862 are Cytoplasmic-facing; it reads HYFQQKVFVL…LKMRCDSLML (219 aa). The Box 1 motif signature appears at 662 to 670; it reads CSREIPDPA. A disordered region spans residues 725–755; the sequence is NWPQREKGIQGHQASEKDMMHSASSPPPPRA. Positions 728–744 are enriched in basic and acidic residues; sequence QREKGIQGHQASEKDMM. Residues 796 to 801 form a required for STAT4 binding region; that stretch reads THDGYL. Phosphotyrosine is present on tyrosine 800.

This sequence belongs to the type I cytokine receptor family. Type 2 subfamily. In terms of assembly, heterodimer/heterooligomer; disulfide-linked. The functional high affinity IL12 receptor is composed of I12RB1 and IL12RB2. Il12RB2 binds JAK2 (via its N-terminal) through a membrane-proximal region of the cytoplasmic domain. Interaction, in vitro and in vivo, with SOCS3 (via its SH2 domain) inhibits the STAT4-mediated activation. Binds STAT4 through a membrane-distal C-terminal region. On IL12 binding, phosphorylated on C-terminal tyrosine residues by JAK2. Phosphorylation on Tyr-800 is required for STAT4 binding and activation, and for SOCS3 binding. Isoform 2 is expressed at similar levels in both naive and activated T-cells.

The protein localises to the membrane. Its function is as follows. Receptor for interleukin-12. This subunit is the signaling component coupling to the JAK2/STAT4 pathway. Promotes the proliferation of T-cells as well as NK cells. Induces the promotion of T-cells towards the Th1 phenotype by strongly enhancing IFN-gamma production. The sequence is that of Interleukin-12 receptor subunit beta-2 (IL12RB2) from Homo sapiens (Human).